A 350-amino-acid chain; its full sequence is Probable dual-specificity RNA methyltransferase RlmN (350 aa).

One can recognise a Radical SAM core domain in the interval A105–N342. A disulfide bond links C112 and C345. C119, C123, and C126 together coordinate [4Fe-4S] cluster. S-adenosyl-L-methionine is bound by residues G166–E167, S198, S221–H223, and N302. C345 serves as the catalytic S-methylcysteine intermediate.

Belongs to the radical SAM superfamily. RlmN family. [4Fe-4S] cluster is required as a cofactor.

Its subcellular location is the cytoplasm. It carries out the reaction adenosine(2503) in 23S rRNA + 2 reduced [2Fe-2S]-[ferredoxin] + 2 S-adenosyl-L-methionine = 2-methyladenosine(2503) in 23S rRNA + 5'-deoxyadenosine + L-methionine + 2 oxidized [2Fe-2S]-[ferredoxin] + S-adenosyl-L-homocysteine. The catalysed reaction is adenosine(37) in tRNA + 2 reduced [2Fe-2S]-[ferredoxin] + 2 S-adenosyl-L-methionine = 2-methyladenosine(37) in tRNA + 5'-deoxyadenosine + L-methionine + 2 oxidized [2Fe-2S]-[ferredoxin] + S-adenosyl-L-homocysteine. Its function is as follows. Specifically methylates position 2 of adenine 2503 in 23S rRNA and position 2 of adenine 37 in tRNAs. The chain is Probable dual-specificity RNA methyltransferase RlmN from Endomicrobium trichonymphae.